Here is a 149-residue protein sequence, read N- to C-terminus: UPF0251 protein Moth_1655 (149 aa).

The tract at residues 129–149 (AGRGPGRGRCHRHGRFGEGEH) is disordered.

This sequence belongs to the UPF0251 family.

The sequence is that of UPF0251 protein Moth_1655 from Moorella thermoacetica (strain ATCC 39073 / JCM 9320).